A 191-amino-acid chain; its full sequence is Protein RER1 homolog (191 aa).

Transmembrane regions (helical) follow at residues 35-55, 57-77, and 135-155; these read AFRW…IILL, GFYI…LLFL, and FFDV…LTFL.

The protein belongs to the RER1 family.

It is found in the membrane. Functionally, may be involved in protein transport along the secretory pathway. This is Protein RER1 homolog (rer-1) from Caenorhabditis elegans.